The sequence spans 404 residues: Zinc metalloprotease Rip1 (404 aa).

The helical transmembrane segment at 1–21 threads the bilayer; that stretch reads MMFVTGIVLFALAILISVALH. His21 serves as a coordination point for Zn(2+). Glu22 is a catalytic residue. Zn(2+) is bound at residue His25. The chain crosses the membrane as a helical span at residues 104 to 124; the sequence is PGMNLAICLVLIYAIALVWGL. A PDZ domain is found at 121-203; the sequence is VWGLPNLHPP…SVPIVVERDG (83 aa). Position 202 (Asp202) interacts with Zn(2+). A run of 2 helical transmembrane segments spans residues 313-333 and 373-393; these read LWVA…TINL and LLPA…LTVT.

It belongs to the peptidase M50B family. Requires Zn(2+) as cofactor.

It localises to the cell membrane. In terms of biological role, a probable intramembrane site-2 protease (S2P) that cleaves type-2 transmembrane proteins within their membrane-spanning domains. Cleaves PbpB (PBP3, FtsI); cleavage is inhibited by Wag31-PbpB interaction. Probably also cleaves anti-sigma factors RskA, RslA and RsmA. Its function is as follows. Regulated intramembrane proteolysis (RIP) occurs when an extracytoplasmic signal (possibly oxidative stress) triggers a concerted proteolytic cascade to transmit information and elicit cellular responses. The membrane-spanning regulatory substrate protein (includes anti-sigma factors RskA, RslA, RsmA, and PbpB in M.tuberculosis) is first cut extracytoplasmically (site-1 protease, S1P), then within the membrane itself (site-2 protease, S2P, this entry), while cytoplasmic proteases finish degrading the regulatory protein, liberating the effector protein (ECF sigma factors SigK, SigL and SigM). This chain is Zinc metalloprotease Rip1 (rip1), found in Mycobacterium bovis (strain BCG / Pasteur 1173P2).